Here is a 434-residue protein sequence, read N- to C-terminus: KH domain-containing protein 3 (434 aa).

The tract at residues 1–39 is involved in RNA binding; the sequence is MATLKTFRTLVQLKHKLGKAYEIVGEPRLPKWFHVEYLE. Positions 40–118 constitute a KH; atypical domain; that stretch reads DPKKMYVEPT…CRMKLMEKEA (79 aa). Phosphothreonine occurs at positions 267 and 279. The tract at residues 334–434 is required for interaction with NUMA1 and regulation of apoptosis in response to DNA damage; sequence VREAATQQTP…RAVWEPFVML (101 aa).

The protein belongs to the KHDC1 family. In terms of assembly, component of the subcortical maternal complex (SCMC), at least composed of NLRP5, KHDC3, OOEP, and TLE6. Within the complex, interacts with NLRP5, KHDC3 and TLE6. The SCMC may facilitate translocation of its components between the nuclear and cytoplasmic compartments. Forms a scaffold complex with OOEP/FLOPED, and interacts with BLM and TRIM25 at DNA replication forks. Interacts with PARP1; the interaction is increased following the formation of DNA double-strand breaks. Interacts (via C-terminus) with NUMA1.

It is found in the cytoplasm. Its subcellular location is the cell cortex. It localises to the nucleus. The protein resides in the mitochondrion. The protein localises to the cytoskeleton. It is found in the microtubule organizing center. Its subcellular location is the centrosome. It localises to the chromosome. In terms of biological role, component of the subcortical maternal complex (SCMC), a multiprotein complex that plays a key role in early embryonic development. The SCMC complex is a structural constituent of cytoplasmic lattices, which consist in fibrous structures found in the cytoplasm of oocytes and preimplantation embryos. They are required to store maternal proteins critical for embryonic development, such as proteins that control epigenetic reprogramming of the preimplantation embryo, and prevent their degradation or activation. KHDC3 ensures proper spindle assembly by regulating the localization of AURKA via RHOA signaling and of PLK1 via a RHOA-independent process. Required for the localization of MAD2L1 to kinetochores to enable spindle assembly checkpoint function. As part of the OOEP-KHDC3 scaffold, recruits BLM and TRIM25 to DNA replication forks, thereby promoting the ubiquitination of BLM by TRIM25, enhancing BLM retainment at replication forks and therefore promoting stalled replication fork restart. Regulates homologous recombination-mediated DNA repair via recruitment of RAD51 to sites of DNA double-strand breaks, and sustainment of PARP1 activity, which in turn modulates downstream ATM or ATR activation. Activation of ATM or ATR in response to DNA double-strand breaks may be cell-type specific. Its role in DNA double-strand break repair is independent of its role in restarting stalled replication forks. Promotes neural stem cell neurogenesis and neuronal differentiation in the hippocampus. May regulate normal development of learning, memory and anxiety. Capable of binding RNA. In Rattus norvegicus (Rat), this protein is KH domain-containing protein 3.